Reading from the N-terminus, the 161-residue chain is Transcription antitermination protein NusB (161 aa).

It belongs to the NusB family.

Its function is as follows. Involved in transcription antitermination. Required for transcription of ribosomal RNA (rRNA) genes. Binds specifically to the boxA antiterminator sequence of the ribosomal RNA (rrn) operons. This chain is Transcription antitermination protein NusB, found in Syntrophus aciditrophicus (strain SB).